A 142-amino-acid chain; its full sequence is Large ribosomal subunit protein uL11 (142 aa).

The protein belongs to the universal ribosomal protein uL11 family. In terms of assembly, part of the ribosomal stalk of the 50S ribosomal subunit. Interacts with L10 and the large rRNA to form the base of the stalk. L10 forms an elongated spine to which L12 dimers bind in a sequential fashion forming a multimeric L10(L12)X complex. In terms of processing, one or more lysine residues are methylated.

In terms of biological role, forms part of the ribosomal stalk which helps the ribosome interact with GTP-bound translation factors. The protein is Large ribosomal subunit protein uL11 of Xanthomonas axonopodis pv. citri (strain 306).